Reading from the N-terminus, the 3164-residue chain is MGGGNNTNPGGPVHKQAGSLASRAHMIAGTPPHSTMERGGDRDIVVTGARNQFAPDLEPGGSVSCMRSSLSFLSLIFDVGPRDVLSAEAIEGCLVEGGEWTRATAGPGPPRMCSIVELPNFLEYPGARGGLRCVFSRVYGEVGFFGEPAAGLLETQCPAHTFFAGPWALRPLSYTLLTIGPLGMGLFRDGDTAYLFDPHGLPEGTPAFIAKVRAGDMYPYLTYYTRDRPDVRWAGAMVFFVPSGPEPAAPADLTAAALHLYGASETYLQDEAFSERRVAITHPLRGEIAGLGEPCVGVGPREGVGGPGPHPPTAAQSPPPTRARRDDRASETSRGTAGPSAKPEAKRPNRAPDDVWAVALKGTPPTDPPSADPPSADPPSAIPPPPPSAPKTPAAEAAEEDDDDMRVLEMGVVPVGRHRARYSAGLPKRRRPTWTPPSSVEDLTSGEKTKRSAPPAKTKKKSTPKGKTPVGAAVPASVPEPVLASAPPDPAGPPVAEAGEDDGPTVPASSQALEALKTRRSPEPPGADLAQLFEAHPNVAATAVKFTACSAALAREVAACSRLTISALRSPYPASPGLLELCVIFFFERVLAFLIENGARTHTQAGVAGPAAALLEFTLNMLPWKTAVGDFLASTRLSLADVAAHLPLVQHVLDENSLIGRLALAKLILVARDVIRETDAFYGELADLELQLRAAPPANLYTRLGEWLLERSQAHPDTLFAPATPTHPEPLLYRVQALAKFARGEEIRVEAEDRQMREALDALARGVDAVSQHAGPLGVMPAPAGAAPQGAPRPPPLGPEAVQVRLEEVRTQARRAIEGAVKEYFYRGAVYSAKALQASDNNDRRFHVASAAVVPVVQLLESLPVFDQHTRDIAQRAAIPAPPPIATSPTAILLRDLIQRGQTLDAPEDLAAWLSVLTDAANQGLIERKPLDELARSIRDINDQQARRSSGLAELRRFDALDAALGQQLDSDAAFVPAPGASPYPDDGGLSPEATRMAEEALRQARAMDAAKLTAELAPDARARLRERARSLEAMLEGARERAKVARDAREKFLHKLQGVLRPLPDFVGLKACPAVLATLRASLPAGWSDLPEAVRGAPPEVTAALRADMWGLLGQYRDALEHPTPDTATALSGLHPSFVVVLKNLFADAPETPFLLQFFADHAPIIAHAVSNAINAGSAAVATADPASTVDAAVRAHRVLVDAVTALGAAASDPASPLAFLAAMADSAAGYVKATRLALDARVAIAQLTTLGSAAADLVVQVRRAANQPEGEHASLIQAATRATTGARESLAGHEGRFGGLLHAEGTAGDHSPSGRALQELGKVIGATRRRADELEAATADLREKMAAQRARSSHERWAADVEAVLDRVESGAEFDVVELRRLQALAGTHGYNPRDFRKRAEQALGTNAKAVTLALETALAFNPYTPENQRHPMLPPLAAIHRIDWSAAFGAAADTYADMFRVDTEPLARLLRLAGGLLERAQANDGFIDYHEAVLHLSEDLGGVPALRQYVPFFQKGYAEYVDIRDRLDALRADARRAIGSVALDLAAAAEEISAVRNDPAAAAELVRAGVTLPCPSEDALVACVAALERVDQSPVKDTAYAHYVAFVTRQDLADTKDAVVRAKQQRAEATERVTAGLREVLAARERRAQLEAEGLANLKTLLKVVAVPATVAKTLDQARSAEEIADQVEILVDQTEKARELDVQAVAWLEHAQRTFETHPLSAASGDGPGLLTRQGARLQALFDTRRRVEALRRSLEEAEAEWDEVWGRFGRVRGGAWKSPEGFRAACEQLRALQDTTNTVSGLRAQRDYERLPAKYQGVLGAKSAERAGAVEELGGRVAQHADLSARLRDEVVPRVAWEMNFDTLGGLLAEFDAVAGDLAPWAVEEFRGARELIQRRMGLYSAYAKATGQTGAGAAAAPAPLLVDLRALDARARASAPPGQEADPQMLRRRGEAYLRVSGGPGPLVLREATSTLDRPFAPSFLVPDGTPLQYALCFPAVTDKLGALLMCPEAACIRPPLPTDTLESASTVTAMYVLTVINRLQLALSDAQAANFQLFGRFVRHRQARWGASMDAAAELYVALVATTLTREFGCRWAQLEWGGDAAAPGPPLGPQSSTRHRVSFNENDVLVALVASSPEHIYTFWRLDLVRQHEYMHLTLPRAFQNAADSMLFVQRLTPHPDARIRVLPAFSAGGPPTRGLMFGTRLADWRRGKLSETDPLAPWRSVPELGTERGAALGKLSPAQALAAVSVLGRMCLPSTALVALWTCMFPDDYTEYDSFDALLTARLESGQTLSPSGGREASPPAPPNALYRPTGQHVAVPAAATHRTPAARVTAMDLVLAAVLLGAPVVVALRNTTAFSRESELELCLTLFDSRARGPDAALRDAVSSDIETWAVRLLHADLNPIENACLAAQLPRLSALIAERPLARGPPCLVLVDISMTPVAVLWENPDPPGPPDVRFVGSEATEELPFVAGGEDVLAASATDEDPFLARAILGRPFDASLLSGELFPGHPVYQRAPDDQSPSVPNPTPGPVDLVGAEGSLGPGSLAPTLFTDATPGEPVPPRMWAWIHGLEELASDDSGGPAPLLAPDPLSPTADQSVPTSQCAPRPPGPAVTAREARPGVPAESTRPAPVGPRDDFRRLPSPQSSPAPPDATAPRPPASSRASAASSSGSRARRHRRARSLARATQASATTQGWRPPALPDTVAPVTDFARPPAPPKPPEPAPHALVSGVPLPLGPQAAGQASPALPIDPVPPPVATGTVLPGGENRRPPLTSGPAPTPPRVPVGGPQRRLTRPAVASLSESRESLPSPWDPADPTAPVLGRNPAEPTSSSPAGPSPPPPAVQPVAPPPTSGPPPTYLTLEGGVAPGGPVSRRPTTRQPVATPTTSARPRGHLTVSRLSAPQPQPQPQPQPQPQPQPQPQPQPQPQPQPQPQPQPQPQPQPQPQPQPQPQPQPQPQPQPQPQPQPQPQPQNGHVAPGEYPAVRFRAPQNRPSVPASASSTNPRTGSSLSGVSSWASSLALHIDATPPPVSLLQTLYVSDDEDSDATSLFLSDSEAEALDPLPGEPHSPITNEPFSALSADDSQEVTRLQFGPPPVSANAVLSRRYVQRTGRSALAVLIRACYRLQQQLQRTRRALLHHSDAVLTSLHHVRMLLG.

Residues 1–273 (MGGGNNTNPG…SETYLQDEAF (273 aa)) are deubiquitination activity. The region spanning 45 to 263 (VVTGARNQFA…TAAALHLYGA (219 aa)) is the Peptidase C76 domain. Active-site residues include Cys65, Asp197, and His199. The segment at 289 to 508 (AGLGEPCVGV…GEDDGPTVPA (220 aa)) is disordered. The span at 308–321 (GPHPPTAAQSPPPT) shows a compositional bias: pro residues. The segment covering 343–353 (PEAKRPNRAPD) has biased composition (basic and acidic residues). The span at 365 to 390 (PTDPPSADPPSADPPSAIPPPPPSAP) shows a compositional bias: pro residues. Residues 416–432 (GRHRARYSAGLPKRRRP) are compositionally biased toward basic residues. The nuclear localization signal stretch occupies residues 426–432 (LPKRRRP). Positions 579-609 (LELCVIFFFERVLAFLIENGARTHTQAGVAG) are interaction with inner tegument protein. An interaction with UL37 region spans residues 579–609 (LELCVIFFFERVLAFLIENGARTHTQAGVAG). Disordered regions lie at residues 2296–2318 (QTLS…LYRP), 2518–2552 (HPVY…LGPG), and 2583–3020 (ASDD…SLSG). Residues 2653–2667 (QSSPAPPDATAPRPP) are compositionally biased toward pro residues. Residues 2668-2680 (ASSRASAASSSGS) show a composition bias toward low complexity. The segment covering 2681–2690 (RARRHRRARS) has biased composition (basic residues). Pro residues predominate over residues 2722 to 2732 (PPAPPKPPEPA). The segment covering 2834-2843 (PAEPTSSSPA) has biased composition (low complexity). The span at 2844–2866 (GPSPPPPAVQPVAPPPTSGPPPT) shows a compositional bias: pro residues. Polar residues predominate over residues 2886-2897 (TRQPVATPTTSA). 35 repeat units span residues 2911–2912 (PQ), 2913–2914 (PQ), 2915–2916 (PQ), 2917–2918 (PQ), 2919–2920 (PQ), 2921–2922 (PQ), 2923–2924 (PQ), 2925–2926 (PQ), 2927–2928 (PQ), 2929–2930 (PQ), 2931–2932 (PQ), 2933–2934 (PQ), 2935–2936 (PQ), 2937–2938 (PQ), 2939–2940 (PQ), 2941–2942 (PQ), 2943–2944 (PQ), 2945–2946 (PQ), 2947–2948 (PQ), 2949–2950 (PQ), 2951–2952 (PQ), 2953–2954 (PQ), 2955–2956 (PQ), 2957–2958 (PQ), 2959–2960 (PQ), 2961–2962 (PQ), 2963–2964 (PQ), 2965–2966 (PQ), 2967–2968 (PQ), 2969–2970 (PQ), 2971–2972 (PQ), 2973–2974 (PQ), 2975–2976 (PQ), 2977–2978 (PQ), and 2979–2980 (PQ). The interval 2911–2980 (PQPQPQPQPQ…PQPQPQPQPQ (70 aa)) is 35 X 2 AA tandem repeats of P-Q. The span at 2912-2978 (QPQPQPQPQP…PQPQPQPQPQ (67 aa)) shows a compositional bias: pro residues. Polar residues predominate over residues 2999–3014 (NRPSVPASASSTNPRT).

It belongs to the herpesviridae large tegument protein family. As to quaternary structure, interacts with host CUL1 and CUL4A; these interactions inhibit the E3 ligase activity of cullins. Interacts with inner tegument protein. Interacts with capsid vertex specific component CVC2. Interacts with the major capsid protein/MCP. Interacts with VP16; this interaction is important for outer tegument association to the capsid. May form homodimers. Post-translationally, proteolytically processed, possibly into several polypeptides. Enzymatic activity is only detectable following cleavage of the UL36 protein, which occurs late during viral replication.

The protein localises to the virion tegument. The protein resides in the host cytoplasm. Its subcellular location is the host nucleus. The catalysed reaction is Thiol-dependent hydrolysis of ester, thioester, amide, peptide and isopeptide bonds formed by the C-terminal Gly of ubiquitin (a 76-residue protein attached to proteins as an intracellular targeting signal).. Functionally, large tegument protein that plays multiple roles in the viral cycle. During viral entry, remains associated with the capsid while most of the tegument is detached and participates in the capsid transport toward the host nucleus. Plays a role in the routing of the capsid at the nuclear pore complex and subsequent uncoating. Within the host nucleus, acts as a deneddylase and promotes the degradation of nuclear CRLs (cullin-RING ubiquitin ligases) and thereby stabilizes nuclear CRL substrates, while cytoplasmic CRLs remain unaffected. These modifications prevent host cell cycle S-phase progression and create a favorable environment allowing efficient viral genome replication. Participates later in the secondary envelopment of capsids. Indeed, plays a linker role for the association of the outer viral tegument to the capsids together with the inner tegument protein. This Human herpesvirus 1 (strain 17) (HHV-1) protein is Large tegument protein deneddylase.